The sequence spans 328 residues: Putative potassium channel protein YugO (328 aa).

3 helical membrane-spanning segments follow: residues 19 to 39 (IGVI…ILEP), 42 to 62 (FTSV…VGYG), and 73 to 93 (AAGI…FATL). The RCK N-terminal domain occupies 114–238 (RDHIILIGWN…ERAGANQIIG (125 aa)).

The protein resides in the cell membrane. The protein is Putative potassium channel protein YugO (yugO) of Bacillus subtilis (strain 168).